Here is a 64-residue protein sequence, read N- to C-terminus: Large ribosomal subunit protein bL33 (64 aa).

Belongs to the bacterial ribosomal protein bL33 family.

The protein is Large ribosomal subunit protein bL33 of Crocosphaera subtropica (strain ATCC 51142 / BH68) (Cyanothece sp. (strain ATCC 51142)).